The chain runs to 103 residues: Growth-regulated alpha protein (103 aa).

The first 30 residues, 1-30, serve as a signal peptide directing secretion; it reads MARAANPAPRLLGAAMLLLLLVAAGRRAAG. 2 cysteine pairs are disulfide-bonded: Cys39–Cys65 and Cys41–Cys81.

It belongs to the intercrine alpha (chemokine CxC) family.

It localises to the secreted. Functionally, has chemotactic activity for neutrophils. The protein is Growth-regulated alpha protein (CXCL1) of Ovis aries (Sheep).